Consider the following 190-residue polypeptide: Dirigent protein 15 (190 aa).

The first 19 residues, 1–19 (MKSTLIIFFTLCLSMAVMA), serve as a signal peptide directing secretion. N-linked (GlcNAc...) asparagine glycans are attached at residues N63 and N128.

Belongs to the plant dirigent protein family. Homodimer.

It is found in the secreted. The protein localises to the extracellular space. It localises to the apoplast. In terms of biological role, dirigent proteins impart stereoselectivity on the phenoxy radical-coupling reaction, yielding optically active lignans from two molecules of coniferyl alcohol in the biosynthesis of lignans, flavonolignans, and alkaloids and thus plays a central role in plant secondary metabolism. The polypeptide is Dirigent protein 15 (DIR15) (Arabidopsis thaliana (Mouse-ear cress)).